An 823-amino-acid polypeptide reads, in one-letter code: MAEPSAPESKHKSSLNSSPWSGLMALGNSRHGHHGPGTQSASSAAAPKPGPPAGLSGGLSQPAGWQSLLSFTILFLAWLAGFSSRLFAVIRFESIIHEFDPWFNYRSTHHLASHGFYEFLNWFDERAWYPLGRIVGGTVYPGLMITAGLIHWILNTLNITVHIRDVCVFLAPTFSGLTSISTFLLTRELWNQGAGLLAACFIAIVPGYISRSVAGSFDNEGIAIFALQFTYYLWVKSVKTGSVFWTMCCCLSYFYMVSAWGGYVFIINLIPLHVFVLLLMQRYSKRVYIAYSTFYIVGLILSMQIPFVGFQPIRTSEHMAAAGVFALLQAYAFLQYLRDRLTKQEFQTLFFLGVSLAAGAVFLSVIYLTYTGYIAPWSGRFYSLWDTGYAKIHIPIIASVSEHQPTTWVSFFFDLHILVCTFPAGLWFCIKNINDERVFVALYAISAVYFAGVMVRLMLTLTPVVCMLSAIAFSNVFEHYLGDDMKRENPPVEDSSDEDDKRNPGNLYDKAGKVRKHVTEQEKPEEGLGPNIKSIVTMLMLMLLMMFAVHCTWVTSNAYSSPSVVLASYNHDGTRNILDDFREAYFWLRQNTDEHARVMSWWDYGYQIAGMANRTTLVDNNTWNNSHIALVGKAMSSNETAAYKIMRSLDVDYVLVIFGGVIGYSGDDINKFLWMVRIAEGEHPKDIREGDYFTQQGEFRVDKAGSPTLLNCLMYKMSYYRFGEMQLDFRTPPGFDRTRNAEIGNKDIKFKHLEEAFTSEHWLVRIYKVKAPDNRETLGHKPRVTNIVPKQKYLSKKTTKRKRGYVKNKLVFKKGKKTSKKTV.

The tract at residues 1-58 is disordered; the sequence is MAEPSAPESKHKSSLNSSPWSGLMALGNSRHGHHGPGTQSASSAAAPKPGPPAGLSGG. Ala-2 is modified (N-acetylalanine). At 2-41 the chain is on the cytoplasmic side; it reads AEPSAPESKHKSSLNSSPWSGLMALGNSRHGHHGPGTQSA. Phosphoserine is present on residues Ser-13, Ser-18, and Ser-29. Residues 42–83 traverse the membrane as a helical segment; that stretch reads SSAAAPKPGPPAGLSGGLSQPAGWQSLLSFTILFLAWLAGFS. The Lumenal segment spans residues 84-170; that stretch reads SRLFAVIRFE…VHIRDVCVFL (87 aa). The short motif at 98–100 is the DXD motif 1 element; that stretch reads EFD. Mn(2+) is bound at residue Asp-100. A helical membrane pass occupies residues 171 to 189; sequence APTFSGLTSISTFLLTREL. The Cytoplasmic segment spans residues 190–191; it reads WN. Residues 192-209 form a helical membrane-spanning segment; the sequence is QGAGLLAACFIAIVPGYI. At 210 to 220 the chain is on the lumenal side; the sequence is SRSVAGSFDNE. Residues Asp-218 and Glu-220 each contribute to the Mn(2+) site. A DXD motif 2 motif is present at residues 218–220; sequence DNE. The helical transmembrane segment at 221-240 threads the bilayer; sequence GIAIFALQFTYYLWVKSVKT. Topologically, residues 241 to 242 are cytoplasmic; the sequence is GS. Residues 243–257 form a helical membrane-spanning segment; that stretch reads VFWTMCCCLSYFYMV. The Lumenal segment spans residues 258-262; it reads SAWGG. A helical transmembrane segment spans residues 263-279; sequence YVFIINLIPLHVFVLLL. The Cytoplasmic portion of the chain corresponds to 280–284; the sequence is MQRYS. A helical membrane pass occupies residues 285–310; sequence KRVYIAYSTFYIVGLILSMQIPFVGF. Over 311–318 the chain is Lumenal; the sequence is QPIRTSEH. The chain crosses the membrane as a helical span at residues 319 to 338; it reads MAAAGVFALLQAYAFLQYLR. Over 339-347 the chain is Cytoplasmic; that stretch reads DRLTKQEFQ. Residues 348 to 368 form a helical membrane-spanning segment; that stretch reads TLFFLGVSLAAGAVFLSVIYL. Topologically, residues 369 to 407 are lumenal; that stretch reads TYTGYIAPWSGRFYSLWDTGYAKIHIPIIASVSEHQPTT. Positions 399-402 match the SVSE motif motif; the sequence is SVSE. The helical transmembrane segment at 408 to 430 threads the bilayer; it reads WVSFFFDLHILVCTFPAGLWFCI. Residues 431 to 436 are Cytoplasmic-facing; the sequence is KNINDE. Residues 437-453 form a helical membrane-spanning segment; it reads RVFVALYAISAVYFAGV. The Lumenal segment spans residues 454–457; it reads MVRL. Arg-456 provides a ligand contact to dolichyl diphosphooligosaccharide. A helical membrane pass occupies residues 458-479; that stretch reads MLTLTPVVCMLSAIAFSNVFEH. Residues 480 to 523 lie on the Cytoplasmic side of the membrane; sequence YLGDDMKRENPPVEDSSDEDDKRNPGNLYDKAGKVRKHVTEQEK. A disordered region spans residues 487-526; sequence RENPPVEDSSDEDDKRNPGNLYDKAGKVRKHVTEQEKPEE. Phosphoserine is present on residues Ser-495 and Ser-496. Residues 517–526 are compositionally biased toward basic and acidic residues; it reads HVTEQEKPEE. A helical membrane pass occupies residues 524–549; that stretch reads PEEGLGPNIKSIVTMLMLMLLMMFAV. Over 550–823 the chain is Lumenal; it reads HCTWVTSNAY…KGKKTSKKTV (274 aa). Residues 601–603 are interacts with target acceptor peptide in protein substrate; sequence WWD. The WWDYG motif motif lies at 601 to 605; sequence WWDYG. Tyr-606 lines the dolichyl diphosphooligosaccharide pocket. N-linked (GlcNAc...) asparagine glycans are attached at residues Asn-613 and Asn-620. Asn-624 carries N-linked (GlcNAc...) (high mannose) asparagine glycosylation. Residue Asn-638 is glycosylated (N-linked (GlcNAc...) asparagine). The DK motif motif lies at 668 to 675; that stretch reads DINKFLWM.

The protein belongs to the STT3 family. Component of the oligosaccharyltransferase (OST) complex. There are 2 OST complexes, OST-A and OST-B, which contain STT3A or STT3B as catalytic subunit, respectively. OST-A and OST-B contain common core subunits RPN1, RPN2, OST48, OST4, DAD1 and TMEM258, and OST-B contains either MAGT1 or TUSC3 as specific accessory subunit. Mg(2+) serves as cofactor. It depends on Mn(2+) as a cofactor.

The protein localises to the endoplasmic reticulum membrane. It carries out the reaction a di-trans,poly-cis-dolichyl diphosphooligosaccharide + L-asparaginyl-[protein] = N(4)-(oligosaccharide-(1-&gt;4)-N-acetyl-beta-D-glucosaminyl-(1-&gt;4)-N-acetyl-beta-D-glucosaminyl)-L-asparaginyl-[protein] + a di-trans,poly-cis-dolichyl diphosphate + H(+). Its pathway is protein modification; protein glycosylation. Its function is as follows. Catalytic subunit of the oligosaccharyl transferase (OST) complex that catalyzes the initial transfer of a defined glycan (Glc(3)Man(9)GlcNAc(2) in eukaryotes) from the lipid carrier dolichol-pyrophosphate to an asparagine residue within an Asn-X-Ser/Thr consensus motif in nascent polypeptide chains, the first step in protein N-glycosylation. N-glycosylation occurs cotranslationally and the complex associates with the Sec61 complex at the channel-forming translocon complex that mediates protein translocation across the endoplasmic reticulum (ER). All subunits are required for a maximal enzyme activity. This subunit contains the active site and the acceptor peptide and donor lipid-linked oligosaccharide (LLO) binding pockets. STT3B is present in a small subset of OST complexes and mediates both cotranslational and post-translational N-glycosylation of target proteins: STT3B-containing complexes are required for efficient post-translational glycosylation and while they are less competent than STT3A-containing complexes for cotranslational glycosylation, they have the ability to mediate glycosylation of some nascent sites that are not accessible for STT3A. STT3B-containing complexes also act post-translationally and mediate modification of skipped glycosylation sites in unfolded proteins. Plays a role in ER-associated degradation (ERAD) pathway that mediates ubiquitin-dependent degradation of misfolded endoplasmic reticulum proteins by mediating N-glycosylation of unfolded proteins, which are then recognized by the ERAD pathway and targeted for degradation. The chain is Dolichyl-diphosphooligosaccharide--protein glycosyltransferase subunit STT3B from Mus musculus (Mouse).